The following is a 138-amino-acid chain: Salivary protein 15 Iper-3 (138 aa).

Residues 1 to 21 (MESFVAMKVVCITVLFVIVAV) form the signal peptide. N-linked (GlcNAc...) asparagine glycans are attached at residues Asn30, Asn42, Asn68, Asn107, and Asn127. Positions 119–138 (GPNGQKCANKSQCVGHIPGC) are CD4-binding.

It belongs to the salp15 family. Interacts with host CD4. Interacts with host DC-SIGN (CD209). Interacts with Borrelia outer surface protein C (OspC). Expressed in salivary glands.

The protein localises to the secreted. In terms of biological role, salivary tick protein that downregulates host immune system by binding to both dendritic cells, and CD4(+) T cells. Specifically binds to the CD4 coreceptor on T cells. This interaction prevents the activation of the Src kinase, Lck, and its downstream substrate Zap-70, and results in deficient activation of PLCgamma1, the repression of calcium fluxes triggered by T-cell antigen receptor (TCR) ligation, and a subsequent reduction in interleukin-2 production. This salivary protein also binds to DC-SIGN (CD209) on dendritic cells (DC) and activates the Raf-1 kinase/MEK signaling pathway that results in down-regulating expression of pro-inflammatory cytokines. Furthermore, it inhibits T cell proliferation induced by DCs. It also inhibits in vitro keratinocyte inflammation induced by Borrelia burgdorferi or by the major outer surface protein (OspC) of Borrelia. In addition, it downregulates chemokines and monocyte chemoattractant protein 1, as well as several antimicrobial peptides such as defensins, cathelicidin, psoriasin, and RNase 7. Apart from its immunomodulatory activities, it is also associated with protection of Borrelia spirochetes from antibody-mediated killing through its binding to OspC. In vivo, tests on different immune disease animal models show promising therapeutic results, e.g., in inhibiting HIV infection, experimental autoimmune encephalomyelitis, transplantation rejection, and asthma. This Ixodes persulcatus (Taiga tick) protein is Salivary protein 15 Iper-3.